A 115-amino-acid chain; its full sequence is Cell division topological specificity factor (115 aa).

Positions 93 to 115 (QLKEPKNQSELDSPETEGTDQKS) are disordered. Positions 104–115 (DSPETEGTDQKS) are enriched in acidic residues.

It belongs to the MinE family.

Functionally, prevents the cell division inhibition by proteins MinC and MinD at internal division sites while permitting inhibition at polar sites. This ensures cell division at the proper site by restricting the formation of a division septum at the midpoint of the long axis of the cell. The polypeptide is Cell division topological specificity factor (Prochlorococcus marinus (strain NATL1A)).